A 113-amino-acid polypeptide reads, in one-letter code: Hydrogenase maturation factor HypA (113 aa).

H2 contacts Ni(2+). Residues C73, C76, C89, and C92 each contribute to the Zn(2+) site.

The protein belongs to the HypA/HybF family.

Functionally, involved in the maturation of [NiFe] hydrogenases. Required for nickel insertion into the metal center of the hydrogenase. This is Hydrogenase maturation factor HypA from Methylocella silvestris (strain DSM 15510 / CIP 108128 / LMG 27833 / NCIMB 13906 / BL2).